Consider the following 131-residue polypeptide: Putative gamma-taxilin 2 (131 aa).

This sequence belongs to the taxilin family.

The protein is Putative gamma-taxilin 2 (TXLNGY) of Pan troglodytes (Chimpanzee).